A 279-amino-acid polypeptide reads, in one-letter code: Shikimate dehydrogenase (NADP(+)) (279 aa).

Shikimate contacts are provided by residues 20 to 22 and Thr-67; that span reads SRS. The active-site Proton acceptor is Lys-71. Asp-83 serves as a coordination point for NADP(+). Positions 92 and 108 each coordinate shikimate. Residues 134-138 and Leu-223 contribute to the NADP(+) site; that span reads GAGGA. Tyr-225 lines the shikimate pocket. Gly-246 provides a ligand contact to NADP(+).

This sequence belongs to the shikimate dehydrogenase family. As to quaternary structure, homodimer.

The enzyme catalyses shikimate + NADP(+) = 3-dehydroshikimate + NADPH + H(+). Its pathway is metabolic intermediate biosynthesis; chorismate biosynthesis; chorismate from D-erythrose 4-phosphate and phosphoenolpyruvate: step 4/7. Functionally, involved in the biosynthesis of the chorismate, which leads to the biosynthesis of aromatic amino acids. Catalyzes the reversible NADPH linked reduction of 3-dehydroshikimate (DHSA) to yield shikimate (SA). In Cereibacter sphaeroides (strain ATCC 17023 / DSM 158 / JCM 6121 / CCUG 31486 / LMG 2827 / NBRC 12203 / NCIMB 8253 / ATH 2.4.1.) (Rhodobacter sphaeroides), this protein is Shikimate dehydrogenase (NADP(+)).